We begin with the raw amino-acid sequence, 559 residues long: DNA ligase (559 aa).

Residue E248 coordinates ATP. K250 (N6-AMP-lysine intermediate) is an active-site residue. The ATP site is built by R255, R270, E300, F341, R417, and K423.

This sequence belongs to the ATP-dependent DNA ligase family. The cofactor is Mg(2+).

It catalyses the reaction ATP + (deoxyribonucleotide)n-3'-hydroxyl + 5'-phospho-(deoxyribonucleotide)m = (deoxyribonucleotide)n+m + AMP + diphosphate.. Functionally, DNA ligase that seals nicks in double-stranded DNA during DNA replication, DNA recombination and DNA repair. This is DNA ligase from Methanopyrus kandleri (strain AV19 / DSM 6324 / JCM 9639 / NBRC 100938).